The chain runs to 1390 residues: DNA-directed RNA polymerase subunit beta' (1390 aa).

Cysteine 70, cysteine 72, cysteine 85, and cysteine 88 together coordinate Zn(2+). Residues aspartate 460, aspartate 462, and aspartate 464 each contribute to the Mg(2+) site. Zn(2+) is bound by residues cysteine 814, cysteine 888, cysteine 895, and cysteine 898.

It belongs to the RNA polymerase beta' chain family. As to quaternary structure, the RNAP catalytic core consists of 2 alpha, 1 beta, 1 beta' and 1 omega subunit. When a sigma factor is associated with the core the holoenzyme is formed, which can initiate transcription. Requires Mg(2+) as cofactor. Zn(2+) is required as a cofactor.

The catalysed reaction is RNA(n) + a ribonucleoside 5'-triphosphate = RNA(n+1) + diphosphate. In terms of biological role, DNA-dependent RNA polymerase catalyzes the transcription of DNA into RNA using the four ribonucleoside triphosphates as substrates. The sequence is that of DNA-directed RNA polymerase subunit beta' from Pseudoalteromonas translucida (strain TAC 125).